The primary structure comprises 166 residues: Endoribonuclease YbeY (166 aa).

Residues His-132, His-136, and His-142 each coordinate Zn(2+).

Belongs to the endoribonuclease YbeY family. The cofactor is Zn(2+).

The protein localises to the cytoplasm. In terms of biological role, single strand-specific metallo-endoribonuclease involved in late-stage 70S ribosome quality control and in maturation of the 3' terminus of the 16S rRNA. The chain is Endoribonuclease YbeY from Clostridium acetobutylicum (strain ATCC 824 / DSM 792 / JCM 1419 / IAM 19013 / LMG 5710 / NBRC 13948 / NRRL B-527 / VKM B-1787 / 2291 / W).